The chain runs to 3313 residues: MARRPLWWGLPGPSTPLLLLLLFSLFPSSREEMGGGGDQGWDPGVATATGPRAQIGSGAVALCPESPGVWEDGDPGLGVREPVFMKLRVGRQNARNGRGAPEQPNREPVVQALGSREQEAGQGSGYLLCWHPEISSCGRTGHLRRGSLPLDALSPGDSDLRNSSPHPSELLAQPDSPRPVAFQRNGRRSIRKRVETFRCCGKLWEPGHKGQGERSATSTVDRGPLRRDCLPGSLGSGLGEDSAPRAVRTAPAPGSAPHESRTAPERMRSRGLFRRGFLFERPGPRPPGFPTGAEAKRILSTNQARSRRAANRHPQFPQYNYQTLVPENEAAGTAVLRVVAQDPDPGEAGRLVYSLAALMNSRSLELFSIDPQSGLIRTAAALDRESMERHYLRVTAQDHGSPRLSATTMVAVTVADRNDHAPVFEQAQYRETLRENVEEGYPILQLRATDGDAPPNANLRYRFVGSPAARTAAAAAFEIDPRSGLISTSGRVDREHMESYELVVEASDQGQEPGPRSATVRVHITVLDENDNAPQFSEKRYVAQVREDVRPHTVVLRVTATDKDKDANGLVHYNIISGNSRGHFAIDSLTGEIQVMAPLDFEAEREYALRIRAQDAGRPPLSNNTGLASIQVVDINDHSPIFVSTPFQVSVLENAPLGHSVIHIQAVDADHGENSRLEYSLTGVASDTPFVINSATGWVSVSGPLDRESVEHYFFGVEARDHGSPPLSASASVTVTVLDVNDNRPEFTMKEYHLRLNEDAAVGTSVVSVTAVDRDANSAISYQITGGNTRNRFAISTQGGMGLVTLALPLDYKQERYFKLVLTASDRALHDHCYVHINITDANTHRPVFQSAHYSVSMNEDRPVGSTVVVISASDDDVGENARITYLLEDNLPQFRIDADSGAITLQAPLDYEDQVTYTLAITARDNGIPQKADTTYVEVMVNDVNDNAPQFVASHYTGLVSEDAPPFTSVLQISATDRDAHANGRVQYTFQNGEDGDGDFTIEPTSGIVRTVRRLDREAVPVYELTAYAVDRGVPPLRTPVSIQVTVQDVNDNAPVFPAEEFEVRVKENSIVGSVVAQITAVDPDDGPNAHIMYQIVEGNIPELFQMDIFSGELTALIDLDYEARQEYVIVVQATSAPLVSRATVHVRLVDQNDNSPVLNNFQILFNNYVSNRSDTFPSGIIGRIPAYDPDVSDHLFYSFERGNELQLLVVNQTSGELRLSRKLDNNRPLVASMLVTVTDGLHSVTAQCVLRVVIITEELLANSLTVRLENMWQERFLSPLLGHFLEGVAAVLATPTEDVFIFNIQNDTDVGGTVLNVSFSALAPRGAGAGAAGPWFSSEELQEQLYVRRAALAARSLLDVLPFDDNVCLREPCENYMKCVSVLRFDSSAPFLASASTLFRPIQPIAGLRCRCPPGFTGDFCETELDLCYSNPCRNGGACARREGGYTCVCRPRFTGEDCELDTEAGRCVPGVCRNGGTCTNAPNGGFRCQCPAGGAFEGPRCEVAARSFPPSSFVMFRGLRQRFHLTLSLSFATVQPSGLLFYNGRLNEKHDFLALELVAGQVRLTYSTGESSTVVSPTVPGGLSDGQWHTVHLRYYNKPRTDALGGAQGPSKDKVAVLSVDDCNVAVALRFGAEIGNYSCAAAGVQTSSKKSLDLTGPLLLGGVPNLPENFPVSRKDFIGCMRDLHIDGRRVDMAAFVANNGTTAGCQAKSHFCASGPCKNGGLCSERWGGFSCDCPVGFGGKDCRLTMAHPYHFQGNGTLSWDFGNDMPVSVPWYLGLSFRTRATKGVLMQVQLGPHSVLLCKLDQGLLSVTLSRASGHAVHLLLDQMTVSDGRWHDLRLELQEEPGGRRGHHIFMVSLDFTLFQDTMAMGSELEGLKVKHLHVGGPPPSSKEEGPQGLVGCIQGVWTGFTPFGSSALPPPSHRINVEPGCTVTNPCASGPCPPHANCKDLWQTFSCTCWPGYYGPGCVDACLLNPCQNQGSCRHLQGGPHGYTCDCASGYFGQHCEHRMDQQCPRGWWGSPTCGPCNCDVHKGFDPNCNKTSGQCHCKEFHYRPRGSDSCLPCDCYPVGSTSRSCAPHSGQCPCRPGALGRQCNSCDSPFAEVTASGCRVLYDACPKSLRSGVWWPQTKFGVLATVPCPRGALGLRGTGAAVRLCDEDHGWLEPDFFNCTSPAFRELSLLLDGLELNKTALDTVEAKKLAQRLREVTGQTDHYFSQDVRVTARLLAYLLAFESHQQGFGLTATQDAHFNENLLWAGSALLAPETGDLWAALGQRAPGGSPGSAGLVRHLEEYAATLARNMDLTYLNPVGLVTPNIMLSIDRMEQPSSSQGAHRYPRYHSNLFRGQDAWDPHTHVLLPSQSPQPSPSEVLPTSSNAENATASGVVSPPAPLEPESEPGISIVILLVYRALGGLLPAQFQAERRGARLPQNPVMNSPVVSVAVFRGRNFLRGALVSPINLEFRLLQTANRSKAICVQWDPPGPADQHGMWTARDCELVHRNGSHARCRCSRTGTFGVLMDASPRERLEGDLELLAVFTHVVVAASVTALVLTAAVLLSLRSLKSNVRGIHANVAAALGVAELLFLLGIHRTHNQLLCTVVAILLHYFFLSTFAWLLVQGLHLYRMQVEPRNVDRGAMRFYHALGWGVPAVLLGLAVGLDPEGYGNPDFCWISIHEPLIWSFAGPIVLVIVMNGIMFLLAARTSCSTGQREAKKTSVLRTLRSSFLLLLLVSASWLFGLLAVNHSVLAFHYLHAGLCGLQGLAVLLLFCVLNADARAAWTPACLGKKAAPEETRPAPGPGSGAYNNTALFEESGLIRITLGASTVSSVSSARSGRAQDQDSQRGRSYLRDNVLVRHGSTAEHAEHSLQAHAGPTDLDVAMFHRDAGADSDSDSDLSLEEERSLSIPSSESEDNGRTRGRFQRPLRRAAQSERLLAHPKDVDGNDLLSYWPALGECEAAPCALQAWGSERRLGLDSNKDAANNNQPELALTSGDETSLGRAQRQRKGILKNRLQYPLVPQTRGTPELSWCRAATLGHRAVPAASYGRIYAGGGTGSLSQPASRYSSREQLDLLLRRQLSRERLEEVPVPAPVLHPLSRPGSQERLDTAPARLEPRDRGSTLPRRQPPRDYPGTMAGRFGSRDALDLGAPREWLSTLPPPRRNRDLDPQHPPLPLSPQRPLSRDPLLPSRPLDSLSRISNSRERLDQVPSRHPSREALGPAPQLLRAREDPASGPSHGPSTEQLDILSSILASFNSSALSSVQSSSTPSGPHTTATPSATASALGPSTPRSATSHSISELSPDSEVPRSEGHS.

The N-terminal stretch at 1–31 is a signal peptide; the sequence is MARRPLWWGLPGPSTPLLLLLLFSLFPSSRE. Topologically, residues 32 to 2538 are extracellular; that stretch reads EMGGGGDQGW…RLEGDLELLA (2507 aa). Disordered stretches follow at residues 148–187 and 205–269; these read LPLD…RNGR and EPGH…RMRS. Positions 258–268 are enriched in basic and acidic residues; it reads HESRTAPERMR. 9 Cadherin domains span residues 317–424, 425–536, 537–642, 643–747, 748–849, 850–952, 953–1058, 1059–1160, and 1161–1257; these read PQYN…APVF, EQAQ…APQF, SEKR…SPIF, VSTP…RPEF, TMKE…RPVF, QSAH…APQF, VASH…APVF, PAEE…SPVL, and NNFQ…VVII. The N-linked (GlcNAc...) asparagine glycan is linked to Asn623. Asn838 carries an N-linked (GlcNAc...) asparagine glycan. N-linked (GlcNAc...) asparagine glycosylation is found at Asn1173, Asn1213, Asn1308, and Asn1318. In terms of domain architecture, EGF-like 1; calcium-binding spans 1366-1424; it reads DDNVCLREPCENYMKCVSVLRFDSSAPFLASASTLFRPIQPIAGLRCRCPPGFTGDFCE. 9 cysteine pairs are disulfide-bonded: Cys1370/Cys1381, Cys1375/Cys1412, Cys1414/Cys1423, Cys1430/Cys1441, Cys1435/Cys1450, Cys1452/Cys1461, Cys1470/Cys1481, Cys1475/Cys1491, and Cys1493/Cys1504. Positions 1426-1462 constitute an EGF-like 2; calcium-binding domain; that stretch reads ELDLCYSNPCRNGGACARREGGYTCVCRPRFTGEDCE. Residues 1466-1505 form the EGF-like 3; calcium-binding domain; that stretch reads EAGRCVPGVCRNGGTCTNAPNGGFRCQCPAGGAFEGPRCE. Residues 1506 to 1710 enclose the Laminin G-like 1 domain; that stretch reads VAARSFPPSS…VANNGTTAGC (205 aa). 2 N-linked (GlcNAc...) asparagine glycosylation sites follow: Asn1640 and Asn1704. 4 disulfides stabilise this stretch: Cys1684-Cys1710, Cys1717-Cys1728, Cys1722-Cys1737, and Cys1739-Cys1748. Residues 1713–1749 enclose the EGF-like 4; calcium-binding domain; that stretch reads KSHFCASGPCKNGGLCSERWGGFSCDCPVGFGGKDCR. Residues 1753 to 1935 enclose the Laminin G-like 2 domain; it reads AHPYHFQGNG…SHRINVEPGC (183 aa). Asn1761 carries N-linked (GlcNAc...) asparagine glycosylation. 9 cysteine pairs are disulfide-bonded: Cys1906/Cys1935, Cys1941/Cys1952, Cys1946/Cys1961, Cys1963/Cys1972, Cys1976/Cys1987, Cys1981/Cys1999, Cys2001/Cys2010, Cys2018/Cys2031, and Cys2033/Cys2043. The region spanning 1937-1972 is the EGF-like 5; calcium-binding domain; sequence VTNPCASGPCPPHANCKDLWQTFSCTCWPGYYGPGC. At Asp1954 the chain carries (3R)-3-hydroxyaspartate. One can recognise an EGF-like 6; calcium-binding domain in the interval 1973-2011; the sequence is VDACLLNPCQNQGSCRHLQGGPHGYTCDCASGYFGQHCE. In terms of domain architecture, EGF-like 7; calcium-binding spans 2012 to 2044; it reads HRMDQQCPRGWWGSPTCGPCNCDVHKGFDPNCN. Asn2044 is a glycosylation site (N-linked (GlcNAc...) asparagine). Positions 2046-2081 constitute an EGF-like 8; calcium-binding domain; sequence TSGQCHCKEFHYRPRGSDSCLPCDCYPVGSTSRSCA. 5 disulfide bridges follow: Cys2050–Cys2065, Cys2052–Cys2068, Cys2070–Cys2080, Cys2089–Cys2098, and Cys2101–Cys2113. Residues 2068–2115 enclose the Laminin EGF-like domain; the sequence is CDCYPVGSTSRSCAPHSGQCPCRPGALGRQCNSCDSPFAEVTASGCRV. Residue Tyr2117 is modified to Phosphotyrosine. Asn2173, Asn2192, Asn2382, Asn2472, and Asn2504 each carry an N-linked (GlcNAc...) asparagine glycan. The segment at 2356–2395 is disordered; sequence HTHVLLPSQSPQPSPSEVLPTSSNAENATASGVVSPPAPL. One can recognise a GAIN-B domain in the interval 2364-2528; sequence QSPQPSPSEV…GVLMDASPRE (165 aa). Residues 2374–2387 show a composition bias toward polar residues; the sequence is LPTSSNAENATASG. Disulfide bonds link Cys2478-Cys2510 and Cys2498-Cys2512. The interval 2478 to 2528 is GPS; the sequence is CVQWDPPGPADQHGMWTARDCELVHRNGSHARCRCSRTGTFGVLMDASPRE. The helical transmembrane segment at 2539–2559 threads the bilayer; it reads VFTHVVVAASVTALVLTAAVL. Topologically, residues 2560 to 2570 are cytoplasmic; that stretch reads LSLRSLKSNVR. A helical membrane pass occupies residues 2571-2591; it reads GIHANVAAALGVAELLFLLGI. Residues 2592–2599 lie on the Extracellular side of the membrane; that stretch reads HRTHNQLL. Residues 2600–2620 form a helical membrane-spanning segment; that stretch reads CTVVAILLHYFFLSTFAWLLV. Residues 2621–2641 are Cytoplasmic-facing; that stretch reads QGLHLYRMQVEPRNVDRGAMR. A helical transmembrane segment spans residues 2642 to 2662; sequence FYHALGWGVPAVLLGLAVGLD. At 2663-2679 the chain is on the extracellular side; that stretch reads PEGYGNPDFCWISIHEP. Residues 2680-2700 traverse the membrane as a helical segment; that stretch reads LIWSFAGPIVLVIVMNGIMFL. Residues 2701-2724 are Cytoplasmic-facing; that stretch reads LAARTSCSTGQREAKKTSVLRTLR. The helical transmembrane segment at 2725 to 2745 threads the bilayer; that stretch reads SSFLLLLLVSASWLFGLLAVN. The Extracellular portion of the chain corresponds to 2746 to 2752; that stretch reads HSVLAFH. A helical transmembrane segment spans residues 2753–2773; that stretch reads YLHAGLCGLQGLAVLLLFCVL. The Cytoplasmic portion of the chain corresponds to 2774 to 3313; that stretch reads NADARAAWTP…SEVPRSEGHS (540 aa). 2 disordered regions span residues 2887-2927 and 2977-3004; these read AGAD…RPLR and SNKD…RAQR. Residues 2889-2899 show a composition bias toward acidic residues; it reads ADSDSDSDLSL. Positions 2918–2927 are enriched in basic residues; sequence TRGRFQRPLR. Tyr3050 is subject to Phosphotyrosine. 2 disordered regions span residues 3091 to 3242 and 3255 to 3313; these read APVL…PSTE and NSSA…EGHS. Position 3098 is a phosphoserine (Ser3098). Residues 3102–3119 show a composition bias toward basic and acidic residues; the sequence is SQERLDTAPARLEPRDRG. 2 stretches are compositionally biased toward low complexity: residues 3178–3197 and 3255–3289; these read QRPL…SLSR and NSSA…PSTP. The segment covering 3290–3301 has biased composition (polar residues); sequence RSATSHSISELS.

Belongs to the G-protein coupled receptor 2 family. LN-TM7 subfamily. The iron and 2-oxoglutarate dependent 3-hydroxylation of aspartate and asparagine is (R) stereospecific within EGF domains. In terms of tissue distribution, expressed in the brain. Expressed in cerebellum, olfactory bulb, cerebral cortex, hippocampus and brain stem.

It localises to the cell membrane. Receptor that may have an important role in cell/cell signaling during nervous system formation. The chain is Cadherin EGF LAG seven-pass G-type receptor 3 (Celsr3) from Rattus norvegicus (Rat).